We begin with the raw amino-acid sequence, 117 residues long: Large ribosomal subunit protein bL20 (117 aa).

Belongs to the bacterial ribosomal protein bL20 family.

Binds directly to 23S ribosomal RNA and is necessary for the in vitro assembly process of the 50S ribosomal subunit. It is not involved in the protein synthesizing functions of that subunit. This chain is Large ribosomal subunit protein bL20, found in Wolinella succinogenes (strain ATCC 29543 / DSM 1740 / CCUG 13145 / JCM 31913 / LMG 7466 / NCTC 11488 / FDC 602W) (Vibrio succinogenes).